The chain runs to 569 residues: Urease subunit alpha (569 aa).

One can recognise a Urease domain in the interval 131 to 569; that stretch reads GSIDTHIHFI…VPMAQRYFLL (439 aa). Residues His-136, His-138, and Lys-219 each coordinate Ni(2+). Lys-219 is modified (N6-carboxylysine). His-221 contacts substrate. Ni(2+) is bound by residues His-248 and His-274. The active-site Proton donor is the His-322. A Ni(2+)-binding site is contributed by Asp-362.

Belongs to the metallo-dependent hydrolases superfamily. Urease alpha subunit family. Heterotrimer of UreA (gamma), UreB (beta) and UreC (alpha) subunits. Three heterotrimers associate to form the active enzyme. Ni cation serves as cofactor. Carboxylation allows a single lysine to coordinate two nickel ions.

Its subcellular location is the cytoplasm. The catalysed reaction is urea + 2 H2O + H(+) = hydrogencarbonate + 2 NH4(+). It participates in nitrogen metabolism; urea degradation; CO(2) and NH(3) from urea (urease route): step 1/1. The chain is Urease subunit alpha from Prochlorococcus marinus (strain AS9601).